We begin with the raw amino-acid sequence, 128 residues long: DNA-directed RNA polymerase subunit omega (128 aa).

The segment at 87 to 106 is disordered; that stretch reads ARSSQAAPKSAPGQEIGKSF.

This sequence belongs to the RNA polymerase subunit omega family. As to quaternary structure, the RNAP catalytic core consists of 2 alpha, 1 beta, 1 beta' and 1 omega subunit. When a sigma factor is associated with the core the holoenzyme is formed, which can initiate transcription.

The enzyme catalyses RNA(n) + a ribonucleoside 5'-triphosphate = RNA(n+1) + diphosphate. Functionally, promotes RNA polymerase assembly. Latches the N- and C-terminal regions of the beta' subunit thereby facilitating its interaction with the beta and alpha subunits. This chain is DNA-directed RNA polymerase subunit omega, found in Anaplasma marginale (strain Florida).